We begin with the raw amino-acid sequence, 462 residues long: MSASITAYDTIAAISTPPGEGAISIVRLSGETAVATANQVFKGKDLSQVKSHTIHYGHIVDPESGELIDEVMVSVMLAPKTFTREDVVEINCHGGIVATNRILQLLLGEGARMAEPGEFTKRAFLNGRIDLTEAESVMDLIRAKTDRAMQVAVNQLDGNLHTLIKRLRQEILEVLAQVEVNIDYPEYDTDEMTTKMLLEKAQTVQKAISNLLSTASQGKVLREGLATAIVGRPNVGKSSLLNHMLHEDKAIVTDVAGTTRDVLEEYVNVRGVPLKLVDTAGIHDTTDKVEKIGVERSRQAITQADLILLVLDQSEPLTDEDEQLIQATANKKRIIVLNKQDLPAQLDTTALLKLVSPDEIIKTAIPTSAGMDALDERIAKLFFGGIENSQTTVMVSNARQIGLLRQANKSLDAVIAGIHAGMPIDLVQIDMTAAWDKLGEITGESAPDELITQLFSQFCLGK.

3 residues coordinate (6S)-5-formyl-5,6,7,8-tetrahydrofolate: Arg-27, Glu-89, and Arg-128. Residues 224–383 (GLATAIVGRP…LDERIAKLFF (160 aa)) form the TrmE-type G domain. Asn-234 lines the K(+) pocket. GTP contacts are provided by residues 234–239 (NVGKSS), 253–259 (TDVAGTT), and 278–281 (DTAG). Residue Ser-238 coordinates Mg(2+). The K(+) site is built by Thr-253, Val-255, and Thr-258. Thr-259 contacts Mg(2+). Residue Lys-462 participates in (6S)-5-formyl-5,6,7,8-tetrahydrofolate binding.

It belongs to the TRAFAC class TrmE-Era-EngA-EngB-Septin-like GTPase superfamily. TrmE GTPase family. Homodimer. Heterotetramer of two MnmE and two MnmG subunits. The cofactor is K(+).

The protein localises to the cytoplasm. Functionally, exhibits a very high intrinsic GTPase hydrolysis rate. Involved in the addition of a carboxymethylaminomethyl (cmnm) group at the wobble position (U34) of certain tRNAs, forming tRNA-cmnm(5)s(2)U34. The chain is tRNA modification GTPase MnmE from Lacticaseibacillus paracasei (strain ATCC 334 / BCRC 17002 / CCUG 31169 / CIP 107868 / KCTC 3260 / NRRL B-441) (Lactobacillus paracasei).